Reading from the N-terminus, the 31-residue chain is Cytochrome b6-f complex subunit 8 (31 aa).

A helical membrane pass occupies residues 5-25 (IVSLAWAALMVVFTFSLSLVV).

The protein belongs to the PetN family. As to quaternary structure, the 4 large subunits of the cytochrome b6-f complex are cytochrome b6, subunit IV (17 kDa polypeptide, PetD), cytochrome f and the Rieske protein, while the 4 small subunits are PetG, PetL, PetM and PetN. The complex functions as a dimer.

It localises to the plastid. Its subcellular location is the chloroplast thylakoid membrane. In terms of biological role, component of the cytochrome b6-f complex, which mediates electron transfer between photosystem II (PSII) and photosystem I (PSI), cyclic electron flow around PSI, and state transitions. The chain is Cytochrome b6-f complex subunit 8 from Cicer arietinum (Chickpea).